The primary structure comprises 167 residues: tRNA-specific adenosine deaminase (167 aa).

The region spanning 6–117 (FSHEYWMRHA…DAKTGAAGSL (112 aa)) is the CMP/dCMP-type deaminase domain. His-57 contributes to the Zn(2+) binding site. Glu-59 (proton donor) is an active-site residue. Zn(2+) is bound by residues Cys-87 and Cys-90.

The protein belongs to the cytidine and deoxycytidylate deaminase family. Homodimer. The cofactor is Zn(2+).

The catalysed reaction is adenosine(34) in tRNA + H2O + H(+) = inosine(34) in tRNA + NH4(+). Catalyzes the deamination of adenosine to inosine at the wobble position 34 of tRNA(Arg2). This Escherichia coli O157:H7 protein is tRNA-specific adenosine deaminase.